The chain runs to 124 residues: Small ribosomal subunit protein uS12 (124 aa).

Position 89 is a 3-methylthioaspartic acid (Asp89).

The protein belongs to the universal ribosomal protein uS12 family. As to quaternary structure, part of the 30S ribosomal subunit. Contacts proteins S8 and S17. May interact with IF1 in the 30S initiation complex.

In terms of biological role, with S4 and S5 plays an important role in translational accuracy. Functionally, interacts with and stabilizes bases of the 16S rRNA that are involved in tRNA selection in the A site and with the mRNA backbone. Located at the interface of the 30S and 50S subunits, it traverses the body of the 30S subunit contacting proteins on the other side and probably holding the rRNA structure together. The combined cluster of proteins S8, S12 and S17 appears to hold together the shoulder and platform of the 30S subunit. The protein is Small ribosomal subunit protein uS12 of Shewanella amazonensis (strain ATCC BAA-1098 / SB2B).